Consider the following 824-residue polypeptide: Leucine--tRNA ligase (824 aa).

The short motif at 40–50 is the 'HIGH' region element; it reads PYPSGKIHMGH. The short motif at 580–584 is the 'KMSKS' region element; the sequence is KMSKS. K583 provides a ligand contact to ATP.

This sequence belongs to the class-I aminoacyl-tRNA synthetase family.

The protein resides in the cytoplasm. It catalyses the reaction tRNA(Leu) + L-leucine + ATP = L-leucyl-tRNA(Leu) + AMP + diphosphate. The polypeptide is Leucine--tRNA ligase (Alkaliphilus metalliredigens (strain QYMF)).